Reading from the N-terminus, the 351-residue chain is Rhodopsin (351 aa).

The Extracellular segment spans residues 1 to 36 (MNGTEGPFFYIPMSNATGLVRSPYDYPQYYLVPPWG). N-linked (GlcNAc...) asparagine glycosylation is found at asparagine 2 and asparagine 15. The helical transmembrane segment at 37–61 (YACLAAYMFLLILTGFPVNFLTLYV) threads the bilayer. Residues 62-73 (TIEHKKLRSPLN) lie on the Cytoplasmic side of the membrane. Residues 74 to 96 (YILLNLAVADLFMVIGGFTTTMW) traverse the membrane as a helical segment. At 97–110 (TSLNGYFVFGRMGC) the chain is on the extracellular side. A disulfide bridge links cysteine 110 with cysteine 187. A helical transmembrane segment spans residues 111 to 133 (NIEGFFATLGGEIALWSLVVLSM). Residues 134–136 (ERW) carry the 'Ionic lock' involved in activated form stabilization motif. The Cytoplasmic portion of the chain corresponds to 134–152 (ERWIVVCKPISNFRFGENH). The helical transmembrane segment at 153 to 173 (AVMGVAFSWFMAAACAVPPLV) threads the bilayer. The Extracellular portion of the chain corresponds to 174–202 (GWSRYIPEGMQCSCGIDYYTRAEGFNNES). Asparagine 200 carries an N-linked (GlcNAc...) asparagine glycan. A helical transmembrane segment spans residues 203 to 224 (FVIYMFVVHFTCPLTIITFCYG). Residues 225–252 (RLVCTVKEAAAQQQESETTQRAEREVTR) are Cytoplasmic-facing. The helical transmembrane segment at 253 to 274 (MVIIMFVAFLACWVPYASVAWY) threads the bilayer. At 275–286 (IFTHQGSEFGPV) the chain is on the extracellular side. The helical transmembrane segment at 287 to 308 (FMTIPAFFAKSSAVYNPVIYIC) threads the bilayer. At lysine 296 the chain carries N6-(retinylidene)lysine. The Cytoplasmic portion of the chain corresponds to 309–351 (LNKQFRHCMITTLCCGKNPFEEEEGSTTASKTEASSVCSVSPA). 2 S-palmitoyl cysteine lipidation sites follow: cysteine 322 and cysteine 323. Residues 330–351 (EEEGSTTASKTEASSVCSVSPA) are disordered. The span at 334–351 (STTASKTEASSVCSVSPA) shows a compositional bias: polar residues.

It belongs to the G-protein coupled receptor 1 family. Opsin subfamily. Phosphorylated on some or all of the serine and threonine residues present in the C-terminal region. In terms of processing, contains one covalently linked retinal chromophore.

The protein localises to the membrane. It localises to the cell projection. Its subcellular location is the cilium. It is found in the photoreceptor outer segment. Its function is as follows. Photoreceptor required for image-forming vision at low light intensity. While most salt water fish species use retinal as chromophore, most freshwater fish use 3-dehydroretinal, or a mixture of retinal and 3-dehydroretinal. Light-induced isomerization of 11-cis to all-trans retinal triggers a conformational change that activates signaling via G-proteins. Subsequent receptor phosphorylation mediates displacement of the bound G-protein alpha subunit by arrestin and terminates signaling. The protein is Rhodopsin (rho) of Sardina pilchardus (European pilchard).